Here is a 252-residue protein sequence, read N- to C-terminus: Transcriptional regulatory protein HptR (252 aa).

The Response regulatory domain occupies lysine 3–valine 118. Position 55 is a 4-aspartylphosphate (aspartate 55). Residues asparagine 153–glutamine 250 enclose the HTH araC/xylS-type domain. 2 DNA-binding regions (H-T-H motif) span residues serine 170–valine 191 and histidine 217–leucine 240.

Post-translationally, phosphorylated by HptS.

It is found in the cytoplasm. Functionally, member of the two-component regulatory system HptS/HptR that regulates genes involved in hexose phosphate transport system in response to changes in extracellular phosphate sources. Activates uhpT expression to facilitate glucose-6-phosphate/G6P utilization by directly binding to its promoter. Antagonizes CcpA-dependent transcription of a subset of CcpA-regulated genes involved in antibiotic susceptibility. The chain is Transcriptional regulatory protein HptR (hptR) from Staphylococcus aureus (strain MRSA252).